Consider the following 91-residue polypeptide: DNA-directed RNA polymerase subunit omega (91 aa).

Belongs to the RNA polymerase subunit omega family. As to quaternary structure, the RNAP catalytic core consists of 2 alpha, 1 beta, 1 beta' and 1 omega subunit. When a sigma factor is associated with the core the holoenzyme is formed, which can initiate transcription.

It carries out the reaction RNA(n) + a ribonucleoside 5'-triphosphate = RNA(n+1) + diphosphate. Its function is as follows. Promotes RNA polymerase assembly. Latches the N- and C-terminal regions of the beta' subunit thereby facilitating its interaction with the beta and alpha subunits. The sequence is that of DNA-directed RNA polymerase subunit omega from Serratia proteamaculans (strain 568).